A 290-amino-acid chain; its full sequence is Carbonic anhydrase-related protein (290 aa).

The tract at residues 1–26 (MADLSFIEDTVAFPEKEEDEEEEEEG) is disordered. Serine 5 bears the Phosphoserine mark. The segment covering 16-26 (KEEDEEEEEEG) has biased composition (acidic residues). The Alpha-carbonic anhydrase domain maps to 27-289 (VEWGYEEGVE…LSDRVIRAAF (263 aa)). The active-site Proton donor/acceptor is the histidine 87. Zn(2+)-binding residues include histidine 118 and histidine 141.

Belongs to the alpha-carbonic anhydrase family.

Functionally, does not have a carbonic anhydrase catalytic activity. The sequence is that of Carbonic anhydrase-related protein (CA8) from Homo sapiens (Human).